Consider the following 182-residue polypeptide: Methyl-CpG-binding domain-containing protein 5 (182 aa).

Disordered regions lie at residues 1–56 (MSNG…GTVD) and 80–126 (HGTP…KPLN). In terms of domain architecture, MBD spans 25–101 (KRATPGDDNW…ENGDSHSEHS (77 aa)). Residues 92–105 (ENGDSHSEHSEGRG) are compositionally biased toward basic and acidic residues. Residues 106–115 (SARRQTKSNK) are compositionally biased toward basic residues.

As to quaternary structure, homodimer and heterodimer with MBD6. Interacts with DDM1 via its MBD domain. Mostly expressed in flowers, and, to a lower extent, in seedlings, buds, stems and mature seeds, but barely in roots, exclusively in root meristem cells at tips (at protein level).

Its subcellular location is the nucleus. The protein resides in the chromosome. Functionally, transcriptional regulator that binds CpG islands in promoters where the DNA is methylated at position 5 of cytosine within CpG dinucleotides. In addition, binds specifically methylated m(5)CpNpN but not m(5)CpNpG (N is A, T or C). Plays probably a role in gene silencing. The protein is Methyl-CpG-binding domain-containing protein 5 (MBD5) of Arabidopsis thaliana (Mouse-ear cress).